We begin with the raw amino-acid sequence, 1022 residues long: Sodium-dependent transporter snf-12 (1022 aa).

Residues 1-165 (MNGEWKSALR…RRELWRTQKD (165 aa)) are Cytoplasmic-facing. The helical transmembrane segment at 166–185 (FFLSCLGFMVGVGHTMRFPA) threads the bilayer. Residues 186–192 (KVYQHGG) lie on the Extracellular side of the membrane. The chain crosses the membrane as a helical span at residues 193–213 (GVFFIPYLFSLIFFGLPLVFL). The Cytoplasmic segment spans residues 214-241 (HLSLGQYTGQAANTAFQRLMPIGSGVGW). Residues 242-262 (ALVVIAIPVAVYYNIIVAWAI) traverse the membrane as a helical segment. The Extracellular portion of the chain corresponds to 263 to 337 (HYFFQSAKGL…DFALGPLQSH (75 aa)). A helical transmembrane segment spans residues 338–358 (LVLSLAAAWLLVFFGVFKGLG). Position 359 (Ser-359) is a topological domain, cytoplasmic. Residues 360–380 (IAQTMNVTATVPYLLLSILLL) form a helical membrane-spanning segment. At 381 to 412 (RGISLPGANKGLTFLFTVDSTKLWKWQIWKSA) the chain is on the extracellular side. A helical membrane pass occupies residues 413-433 (AEQVFYELGIDAGPLISMAAF). Residues 434 to 444 (SRYRNNIYRDS) lie on the Cytoplasmic side of the membrane. A helical membrane pass occupies residues 445–465 (VLLVIMDALTSCLSGMVIFSF). At 466–498 (VGFIASESNSNVNDVLKHDPLYLSFTVYPGVTS) the chain is on the extracellular side. Residues 499 to 519 (FMYWGGLWATLFFGMLVLAAI) traverse the membrane as a helical segment. The Cytoplasmic segment spans residues 520–550 (DAEFAWLEMIASAFMNHFSMKNKAVENRLLA). Residues 551–571 (FLCLAGFFLGLPLCAQGGIFV) traverse the membrane as a helical segment. Topologically, residues 572 to 584 (FHAIENLNANWNS) are extracellular. The chain crosses the membrane as a helical span at residues 585-605 (FSLALLSVAIVCYVYGIDNYL). At 606-641 (TDISAMLRVPRIQISKATRLKEKLIYFFGPGGIYIK) the chain is on the cytoplasmic side. The chain crosses the membrane as a helical span at residues 642–662 (FSLCFICPVILTVLLVASVLG). Residues 663 to 677 (YQRISFAGRPIPIDY) are Extracellular-facing. A helical transmembrane segment spans residues 678–698 (EIVAWIVMIGPLLVVPLVAFM). Over 699–1022 (QIRQIRNEGK…RPKPIDMPPK (324 aa)) the chain is Cytoplasmic. Disordered stretches follow at residues 867–948 (RIPN…SSDD) and 995–1022 (IYDQ…MPPK). The segment covering 893-907 (SDPPVPTSPLPPPPK) has biased composition (pro residues). Residues 933-943 (DDSPSISNSSD) are compositionally biased toward low complexity.

It belongs to the sodium:neurotransmitter symporter (SNF) (TC 2.A.22) family. May interact with STAT family transcription factor sta-2; the interaction is probably direct.

It is found in the membrane. Its subcellular location is the cytoplasm. The protein localises to the vesicle. In terms of biological role, probably mediates sodium-dependent uptake of unknown small molecule(s). By positively modulating expression, in the epidermis, of antimicrobial peptides such as nlp-29, plays a role in resistance to fungal infection and in the response to physical wounding and phorbol ester PMA treatment. Role in response to wounding of the epidermis may be facilitated by recruitment of snf-12 to the wound site by microtubule-dependent vesicle trafficking. Functions cell autonomously in the epidermis, in concert with STAT transcription factor sta-2, probably acting at vesicular membranes, downstream of a p38 MAPK/pmk-1 pathway. The protein is Sodium-dependent transporter snf-12 of Caenorhabditis elegans.